The chain runs to 347 residues: Ketol-acid reductoisomerase (NADP(+)) (347 aa).

Residues 1–185 (MKIYYDEDAN…GGTRAGVLET (185 aa)) form the KARI N-terminal Rossmann domain. NADP(+) contacts are provided by residues 24 to 27 (YGSQ), Arg-47, Ser-50, Ser-52, and 82 to 85 (DEFQ). His-107 is an active-site residue. An NADP(+)-binding site is contributed by Gly-133. The region spanning 186–336 (SFKEETETDL…AELRSKMKFL (151 aa)) is the KARI C-terminal knotted domain. The Mg(2+) site is built by Asp-194, Glu-198, Glu-230, and Glu-234. Position 255 (Ser-255) interacts with substrate.

This sequence belongs to the ketol-acid reductoisomerase family. Requires Mg(2+) as cofactor.

It carries out the reaction (2R)-2,3-dihydroxy-3-methylbutanoate + NADP(+) = (2S)-2-acetolactate + NADPH + H(+). The enzyme catalyses (2R,3R)-2,3-dihydroxy-3-methylpentanoate + NADP(+) = (S)-2-ethyl-2-hydroxy-3-oxobutanoate + NADPH + H(+). It functions in the pathway amino-acid biosynthesis; L-isoleucine biosynthesis; L-isoleucine from 2-oxobutanoate: step 2/4. It participates in amino-acid biosynthesis; L-valine biosynthesis; L-valine from pyruvate: step 2/4. In terms of biological role, involved in the biosynthesis of branched-chain amino acids (BCAA). Catalyzes an alkyl-migration followed by a ketol-acid reduction of (S)-2-acetolactate (S2AL) to yield (R)-2,3-dihydroxy-isovalerate. In the isomerase reaction, S2AL is rearranged via a Mg-dependent methyl migration to produce 3-hydroxy-3-methyl-2-ketobutyrate (HMKB). In the reductase reaction, this 2-ketoacid undergoes a metal-dependent reduction by NADPH to yield (R)-2,3-dihydroxy-isovalerate. The protein is Ketol-acid reductoisomerase (NADP(+)) of Gamma-proteobacterium EBAC31A08.